Reading from the N-terminus, the 330-residue chain is Malate dehydrogenase (330 aa).

12–18 (GAAGQIG) provides a ligand contact to NAD(+). Substrate-binding residues include R93 and R99. NAD(+)-binding positions include N106, Q113, and 130-132 (VGN). Substrate contacts are provided by N132 and R166. H191 (proton acceptor) is an active-site residue.

Belongs to the LDH/MDH superfamily. MDH type 2 family.

The catalysed reaction is (S)-malate + NAD(+) = oxaloacetate + NADH + H(+). Catalyzes the reversible oxidation of malate to oxaloacetate. The protein is Malate dehydrogenase of Azoarcus sp. (strain BH72).